A 337-amino-acid chain; its full sequence is Ketol-acid reductoisomerase (NADP(+)) (337 aa).

One can recognise a KARI N-terminal Rossmann domain in the interval 1-180 (MQVYYDKDAD…GGTKGGVIET (180 aa)). Residues 24–27 (YGSQ), R47, and S51 each bind NADP(+). Residue H106 is part of the active site. G132 serves as a coordination point for NADP(+). One can recognise a KARI C-terminal knotted domain in the interval 181–326 (TFREETETDL…AQLRAMMPWI (146 aa)). Residues D189, E193, E225, and E229 each coordinate Mg(2+). A substrate-binding site is contributed by S250.

It belongs to the ketol-acid reductoisomerase family. Requires Mg(2+) as cofactor.

The enzyme catalyses (2R)-2,3-dihydroxy-3-methylbutanoate + NADP(+) = (2S)-2-acetolactate + NADPH + H(+). It catalyses the reaction (2R,3R)-2,3-dihydroxy-3-methylpentanoate + NADP(+) = (S)-2-ethyl-2-hydroxy-3-oxobutanoate + NADPH + H(+). Its pathway is amino-acid biosynthesis; L-isoleucine biosynthesis; L-isoleucine from 2-oxobutanoate: step 2/4. The protein operates within amino-acid biosynthesis; L-valine biosynthesis; L-valine from pyruvate: step 2/4. Functionally, involved in the biosynthesis of branched-chain amino acids (BCAA). Catalyzes an alkyl-migration followed by a ketol-acid reduction of (S)-2-acetolactate (S2AL) to yield (R)-2,3-dihydroxy-isovalerate. In the isomerase reaction, S2AL is rearranged via a Mg-dependent methyl migration to produce 3-hydroxy-3-methyl-2-ketobutyrate (HMKB). In the reductase reaction, this 2-ketoacid undergoes a metal-dependent reduction by NADPH to yield (R)-2,3-dihydroxy-isovalerate. In Neisseria meningitidis serogroup C (strain 053442), this protein is Ketol-acid reductoisomerase (NADP(+)).